The sequence spans 313 residues: MNDTVHKHITVLLHEAVDGLAIKPSGIYIDGTFGRGGHSRLILSKLSEQGRLIATDRDPRAIAEANTIDDTRFQIVHTAFSAIPDVCEQLGLTGKIDGILLDLGVSSPQLDDAERGFSFMRDGPLDMRMDTTKGLSAAEWLAQVSADDLAWVLKTFGEERFAKRIAQAVVSYNKSATDKISRTLQLAQIIADAVPFKDKHKHPATRSFQAIRIFINSELDELEKALQSALSVLAPEGRLSIISFHSLEDRMVKQFMKKNSKGMDVPKGLPILESELNKNIPLKIIGKAIMPSEAEIEANPRSRSAVLRIAEKR.

S-adenosyl-L-methionine-binding positions include 36-38 (GGH), Asp56, Phe80, Asp102, and Gln109.

Belongs to the methyltransferase superfamily. RsmH family.

The protein resides in the cytoplasm. It catalyses the reaction cytidine(1402) in 16S rRNA + S-adenosyl-L-methionine = N(4)-methylcytidine(1402) in 16S rRNA + S-adenosyl-L-homocysteine + H(+). Specifically methylates the N4 position of cytidine in position 1402 (C1402) of 16S rRNA. This Actinobacillus pleuropneumoniae serotype 7 (strain AP76) protein is Ribosomal RNA small subunit methyltransferase H.